An 859-amino-acid polypeptide reads, in one-letter code: Linoleate 9S-lipoxygenase 1 (859 aa).

In terms of domain architecture, PLAT spans Val21–Ser161. Residues Thr164–Ile859 enclose the Lipoxygenase domain. The disordered stretch occupies residues Lys213–Ser246. Residues His519, His524, His711, Asn715, and Ile859 each contribute to the Fe cation site.

The protein belongs to the lipoxygenase family. In terms of assembly, monomer. Fe cation is required as a cofactor. Seedlings, roots, leaves, and flowers (at protein level). Expressed in guard cells.

The protein resides in the cytoplasm. It catalyses the reaction (9Z,12Z)-octadecadienoate + O2 = (9S)-hydroperoxy-(10E,12Z)-octadecadienoate. The enzyme catalyses (9Z,12Z,15Z)-octadecatrienoate + O2 = (9S)-hydroperoxy-(10E,12Z,15Z)-octadecatrienoate. Its pathway is lipid metabolism; oxylipin biosynthesis. 9S-lipoxygenase that can use linoleic acid or linolenic acid as substrates. Plant lipoxygenases may be involved in a number of diverse aspects of plant physiology including growth and development, pest resistance, and senescence or responses to wounding. Catalyzes the hydroperoxidation of lipids containing a cis,cis-1,4-pentadiene structure. Function as regulators of root development by controlling the emergence of lateral roots. 9S-lypoxygenase-derived oxylipins may play an antagonistic role to ethylene signaling in the control of responses involving oxidative stress, lipid peroxidation and plant defense. LOX1-derived oxylipins may be involved in stress signaling from roots to shoots in response to cadmium exposure. 9S-lypoxygenase-derived oxylipins are engaged during infection to control the balance between salicylic acid (SA) and jasmonate (JA) signaling to facilitate infection by the fungal pathogen Fusarium graminearum. 9S-lypoxygenase-derived oxylipins activate brassinosteroid signaling to promote cell wall-based defense and limit pathogen infection. The LOX1-derived compound (9S)-hydroperoxy-(10E,12Z,15Z)-octadecatrienoate protects plant tissues against infection by the bacterial pathogen Pseudomonas syringae pv tomato DC3000. The LOX1-derived oxylipins are required to trigger stomatal closure in response to both infection by the bacterial pathogen Pseudomonas syringae pv tomato DC3000, and the pathogen-associated molecular pattern (PAMP) flagellin peptide flg22. Contributes to the oxidation of free fatty acids during seed aging. This chain is Linoleate 9S-lipoxygenase 1, found in Arabidopsis thaliana (Mouse-ear cress).